A 293-amino-acid polypeptide reads, in one-letter code: Mating-type protein A-1 (293 aa).

Positions 42–97 form a DNA-binding region, alpha box; the sequence is AAKKKVNGFMGFRSYYSPLFSQLPQKERSPFMTILWQHDPFHNEWDFMCSVYSSIR.

The protein belongs to the MATALPHA1 family.

Its subcellular location is the nucleus. In terms of biological role, mating type proteins are sequence specific DNA-binding proteins that act as master switches in yeast differentiation by controlling gene expression in a cell type-specific fashion. Transcriptional activator that induces the transcription of A-specific genes like mating factor ccg-4. Required for mating as an A-cell and for blocking of heterokaryon formation (vegetative incompatibility). The chain is Mating-type protein A-1 (mtA-1) from Neurospora crassa (strain ATCC 24698 / 74-OR23-1A / CBS 708.71 / DSM 1257 / FGSC 987).